The chain runs to 192 residues: Ras-like GTP-binding protein O-RHO (192 aa).

12–19 contributes to the GTP binding site; sequence GDGACGKT. The Effector region motif lies at 34–42; it reads YVPTVFENY. GTP is bound by residues 59 to 63 and 117 to 120; these read DTAGQ and NKKT. Cysteine methyl ester is present on cysteine 189. Cysteine 189 is lipidated: S-geranylgeranyl cysteine. Residues 190–192 constitute a propeptide, removed in mature form; it reads LLL.

Belongs to the small GTPase superfamily. Rho family.

It localises to the cell membrane. This Diplobatis ommata (Ocellated electric ray) protein is Ras-like GTP-binding protein O-RHO.